Reading from the N-terminus, the 384-residue chain is Eukaryotic translation initiation factor 3 subunit M (384 aa).

A PCI domain is found at 184–346 (ENRKAIEAMI…KKILITGAFP (163 aa)).

It belongs to the eIF-3 subunit M family. Component of the eukaryotic translation initiation factor 3 (eIF-3) complex.

Its subcellular location is the cytoplasm. In terms of biological role, component of the eukaryotic translation initiation factor 3 (eIF-3) complex, which is involved in protein synthesis of a specialized repertoire of mRNAs and, together with other initiation factors, stimulates binding of mRNA and methionyl-tRNAi to the 40S ribosome. The eIF-3 complex specifically targets and initiates translation of a subset of mRNAs involved in cell proliferation. This is Eukaryotic translation initiation factor 3 subunit M from Schistosoma japonicum (Blood fluke).